Consider the following 259-residue polypeptide: Uridylate kinase (259 aa).

10 to 13 (KLSG) is a binding site for ATP. A UMP-binding site is contributed by glycine 52. The ATP site is built by glycine 53 and arginine 57. UMP-binding positions include aspartate 72 and 134-141 (NGQPFLTT). The ATP site is built by tyrosine 168 and aspartate 171. Positions 236–259 (ISSSPEKSEEFGNEVLASPAESTA) are disordered.

It belongs to the UMP kinase family. In terms of assembly, homohexamer.

The protein localises to the cytoplasm. It catalyses the reaction UMP + ATP = UDP + ADP. Its pathway is pyrimidine metabolism; CTP biosynthesis via de novo pathway; UDP from UMP (UMPK route): step 1/1. Inhibited by UTP. In terms of biological role, catalyzes the reversible phosphorylation of UMP to UDP. The polypeptide is Uridylate kinase (Frankia casuarinae (strain DSM 45818 / CECT 9043 / HFP020203 / CcI3)).